Reading from the N-terminus, the 45-residue chain is Conotoxin reg3.12 (45 aa).

Positions 1–31 (DQPVERHAGNKRHLNPTIRRAMIIDANRREK) are excised as a propeptide. Cystine bridges form between C32/C44, C33/C42, and C38/C45.

It belongs to the conotoxin M superfamily. As to expression, expressed by the venom duct.

The protein resides in the secreted. The chain is Conotoxin reg3.12 from Conus regius (Crown cone).